The chain runs to 299 residues: ATP synthase gamma chain (299 aa).

This sequence belongs to the ATPase gamma chain family. F-type ATPases have 2 components, CF(1) - the catalytic core - and CF(0) - the membrane proton channel. CF(1) has five subunits: alpha(3), beta(3), gamma(1), delta(1), epsilon(1). CF(0) has three main subunits: a, b and c.

It is found in the cell membrane. Produces ATP from ADP in the presence of a proton gradient across the membrane. The gamma chain is believed to be important in regulating ATPase activity and the flow of protons through the CF(0) complex. The chain is ATP synthase gamma chain from Clavibacter michiganensis subsp. michiganensis (strain NCPPB 382).